The sequence spans 45 residues: Metallothionein-like protein 1A (45 aa).

The protein belongs to the metallothionein superfamily. Type 15 family. Expressed in phloem and mesophyll cells of leaves, vascular tissues of cotyledons, sepals and petals. Expressed in anthers. Expressed in root endodermis and at lower levels in cortex of mature region of roots.

Metallothioneins have a high content of cysteine residues that bind various heavy metals. Functions as a metal chelator of copper (Cu) and zinc (Zn). Plays a role in Cu homeostasis in the roots under elevated Cu concentration. Functions cooperatively with the phytochelatin synthase PCS1 to protect plants from Cu and cadmium (Cd) toxicity. Plays a role in Cu homeostasis, specifically in the remobilization of Cu from senescing leaves. The mobilization of Cu from internal sources is important for seed development. Confers tolerance to Cd and plays a role in Cd and Zn homeostasis. This is Metallothionein-like protein 1A (MT1A) from Arabidopsis thaliana (Mouse-ear cress).